We begin with the raw amino-acid sequence, 368 residues long: UPF0284 protein Tery_1555 (368 aa).

The protein belongs to the UPF0284 family.

In Trichodesmium erythraeum (strain IMS101), this protein is UPF0284 protein Tery_1555.